We begin with the raw amino-acid sequence, 952 residues long: Inner tegument protein (952 aa).

The interaction with large tegument protein stretch occupies residues Trp-490–Asn-952.

This sequence belongs to the herpesviridae inner tegument protein family. In terms of assembly, interacts (via C-terminus) with the large tegument protein/LTP (via N-terminus).

It localises to the virion tegument. The protein localises to the host cytoplasm. Its subcellular location is the host nucleus. It is found in the host Golgi apparatus. The protein resides in the host trans-Golgi network. Plays an essential role in cytoplasmic secondary envelopment during viral egress. Interacts with the capsid via the large tegument protein/LTP and participates in its transport to the host trans-Golgi network (TGN) where secondary envelopment occurs. Modulates tegumentation and capsid accumulation at the viral assembly complex. The sequence is that of Inner tegument protein (63) from Connochaetes taurinus (Blue wildebeest).